The primary structure comprises 62 residues: Sec-independent protein translocase protein TatA (62 aa).

A helical membrane pass occupies residues 10–32; the sequence is LLIILIIVIAIFGAGKLAGLGGA.

Belongs to the TatA/E family. As to quaternary structure, forms a complex with TatC.

Its subcellular location is the cell membrane. Its function is as follows. Part of the twin-arginine translocation (Tat) system that transports large folded proteins containing a characteristic twin-arginine motif in their signal peptide across membranes. TatA could form the protein-conducting channel of the Tat system. The sequence is that of Sec-independent protein translocase protein TatA from Chloroflexus aurantiacus (strain ATCC 29366 / DSM 635 / J-10-fl).